A 192-amino-acid polypeptide reads, in one-letter code: MLVEIKAQLKAHCEVMTALQGELSPAIESAVSLVVDAYKAGNKLLVMGNGGSAADAQHFVAEMVGRFKLERRALPAIALHTDTSILTAIGNDYGFDRIFSRQVEAHAAAGDVVVGISTSGNSPNVQLALELAREKGCRTIALLGKDGGSIKSVAELPLIVPSNDTPRIQEGHITIIHIICDLVERELFVKGK.

The 159-residue stretch at 34–192 folds into the SIS domain; that stretch reads VVDAYKAGNK…VERELFVKGK (159 aa). 49-51 provides a ligand contact to substrate; that stretch reads NGG. Zn(2+) contacts are provided by His58 and Glu62. Residues Glu62, 91-92, 117-119, Ser122, and Gln169 contribute to the substrate site; these read ND and STS. Positions 169 and 177 each coordinate Zn(2+).

The protein belongs to the SIS family. GmhA subfamily. As to quaternary structure, homotetramer. It depends on Zn(2+) as a cofactor.

It is found in the cytoplasm. It catalyses the reaction 2 D-sedoheptulose 7-phosphate = D-glycero-alpha-D-manno-heptose 7-phosphate + D-glycero-beta-D-manno-heptose 7-phosphate. It participates in carbohydrate biosynthesis; D-glycero-D-manno-heptose 7-phosphate biosynthesis; D-glycero-alpha-D-manno-heptose 7-phosphate and D-glycero-beta-D-manno-heptose 7-phosphate from sedoheptulose 7-phosphate: step 1/1. Its function is as follows. Catalyzes the isomerization of sedoheptulose 7-phosphate in D-glycero-D-manno-heptose 7-phosphate. The sequence is that of Phosphoheptose isomerase from Citrifermentans bemidjiense (strain ATCC BAA-1014 / DSM 16622 / JCM 12645 / Bem) (Geobacter bemidjiensis).